The following is a 279-amino-acid chain: Biotin synthase (279 aa).

Residues 1 to 227 enclose the Radical SAM core domain; it reads MKVYLCAISN…NAMIMVAGGR (227 aa). Residues Cys16, Cys20, and Cys23 each coordinate [4Fe-4S] cluster. Cys60, Cys95, and Cys153 together coordinate [2Fe-2S] cluster.

The protein belongs to the radical SAM superfamily. Biotin synthase family. As to quaternary structure, homodimer. The cofactor is [4Fe-4S] cluster. [2Fe-2S] cluster serves as cofactor.

The catalysed reaction is (4R,5S)-dethiobiotin + (sulfur carrier)-SH + 2 reduced [2Fe-2S]-[ferredoxin] + 2 S-adenosyl-L-methionine = (sulfur carrier)-H + biotin + 2 5'-deoxyadenosine + 2 L-methionine + 2 oxidized [2Fe-2S]-[ferredoxin]. It participates in cofactor biosynthesis; biotin biosynthesis; biotin from 7,8-diaminononanoate: step 2/2. Catalyzes the conversion of dethiobiotin (DTB) to biotin by the insertion of a sulfur atom into dethiobiotin via a radical-based mechanism. The sequence is that of Biotin synthase from Nitratiruptor sp. (strain SB155-2).